The primary structure comprises 727 residues: E3 ubiquitin-protein ligase LRSAM1 (727 aa).

LRR repeat units follow at residues 30–51 (ADDILDISKCELSEIPFGAFAT), 56–77 (QKKVLIVHTNHLTSLLPKSCSL), 82–103 (TIKVLDLHENQLTALPDDMGQL), 105–126 (VLQVLNVERNQLTHLPRSIGNL), 128–150 (QLQTLNVKDNKLKELPDTLGELR), and 151–172 (SLRTLDISENEIQRLPQMLAHV). Positions 227-248 (GAENTQDSPDGPASRFSREEAE) are disordered. A Phosphoserine modification is found at Ser-234. Coiled-coil stretches lie at residues 241 to 382 (RFSR…NLRQ) and 469 to 547 (RQIR…QENY). One can recognise an SAM domain in the interval 569–632 (GMERRLVALL…LRRAQDLLAV (64 aa)). A Phosphoserine modification is found at Ser-604. 2 consecutive short sequence motifs (PTAP motif) follow at residues 653-656 (PTAP) and 665-668 (PSAP). The segment at 679 to 714 (CVVCLEREAQMVFLTCGHVCCCQQCCQPLRTCPLCR) adopts an RING-type zinc-finger fold.

As to quaternary structure, interacts with TSG101. Interacts with PHF23. Interacts with FUS. Ubiquitination promoted by PHF23 leads to proteasomal degradation. Widely expressed.

The protein resides in the cytoplasm. It catalyses the reaction S-ubiquitinyl-[E2 ubiquitin-conjugating enzyme]-L-cysteine + [acceptor protein]-L-lysine = [E2 ubiquitin-conjugating enzyme]-L-cysteine + N(6)-ubiquitinyl-[acceptor protein]-L-lysine.. The protein operates within protein modification; protein ubiquitination. E3 ubiquitin-protein ligase that mediates monoubiquitination of TSG101 at multiple sites, leading to inactivate the ability of TSG101 to sort endocytic (EGF receptors) and exocytic (viral proteins) cargos. Bacterial recognition protein that defends the cytoplasm from invasive pathogens. Localizes to several intracellular bacterial pathogens and generates the bacteria-associated ubiquitin signal leading to autophagy-mediated intracellular bacteria degradation (xenophagy). The chain is E3 ubiquitin-protein ligase LRSAM1 from Mus musculus (Mouse).